The sequence spans 352 residues: DNA ADP-ribosyl glycohydrolase (352 aa).

Residues 1–155 enclose the Macro domain; the sequence is MITYGSGDLL…IYPPSGGSRA (155 aa). Residues 8–9, 20–22, 31–34, and Thr79 each bind ADP-D-ribose; these read DL, TVN, and IALQ. Lys80 functions as the Nucleophile in the catalytic mechanism. 117–121 is a binding site for ADP-D-ribose; sequence GVGNG. An interaction with DarT region spans residues 164-352; sequence MTWGRAVILE…VALDRILMTA (189 aa).

This sequence belongs to the DarG ADP-ribosyl glycohydrolase family. Interacts (via C-terminus) with cognate toxin DarT; this heterodimeric complex neutralizes the toxic effect of DarT by preventing ssDNA binding to DarT and consequently inactivating the toxin by direct protein-protein interactions.

It carries out the reaction an N-(ADP-alpha-D-ribosyl)-thymidine in DNA + H2O = a thymidine in DNA + ADP-D-ribose. Functionally, antitoxin component of the hybrid type II/IV toxin-antitoxin (TA) system DarTG, which plays a crucial role in controlling bacterial growth and bacteriophage infection. De-ADP-ribosylates DNA (probably) modified on thymidine by its cognate toxin DarT, which neutralizes the activity of cognate toxin DarT. This chain is DNA ADP-ribosyl glycohydrolase, found in Mycobacterium bovis (strain BCG / Pasteur 1173P2).